The primary structure comprises 432 residues: Chaperone SurA (432 aa).

An N-terminal signal peptide occupies residues 1 to 26 (MKKIASFCSAAVLIASSFLLNNTVQA). PpiC domains are found at residues 176–277 (QTEY…KVQD) and 286–386 (VQEV…EVTG).

It localises to the periplasm. The catalysed reaction is [protein]-peptidylproline (omega=180) = [protein]-peptidylproline (omega=0). In terms of biological role, chaperone involved in the correct folding and assembly of outer membrane proteins. Recognizes specific patterns of aromatic residues and the orientation of their side chains, which are found more frequently in integral outer membrane proteins. May act in both early periplasmic and late outer membrane-associated steps of protein maturation. The protein is Chaperone SurA of Idiomarina loihiensis (strain ATCC BAA-735 / DSM 15497 / L2-TR).